The following is a 119-amino-acid chain: Large ribosomal subunit protein uL22 (119 aa).

The protein belongs to the universal ribosomal protein uL22 family. As to quaternary structure, part of the 50S ribosomal subunit.

Functionally, this protein binds specifically to 23S rRNA; its binding is stimulated by other ribosomal proteins, e.g. L4, L17, and L20. It is important during the early stages of 50S assembly. It makes multiple contacts with different domains of the 23S rRNA in the assembled 50S subunit and ribosome. Its function is as follows. The globular domain of the protein is located near the polypeptide exit tunnel on the outside of the subunit, while an extended beta-hairpin is found that lines the wall of the exit tunnel in the center of the 70S ribosome. The protein is Large ribosomal subunit protein uL22 of Rhodopirellula baltica (strain DSM 10527 / NCIMB 13988 / SH1).